Reading from the N-terminus, the 723-residue chain is PX domain-containing protein EREL1 (723 aa).

A compositionally biased stretch (basic residues) spans 1–12; sequence MMQRRSPPKHRH. The interval 1-26 is disordered; that stretch reads MMQRRSPPKHRHDGTSPLPLGMDWSP. In terms of domain architecture, PX spans 48-165; it reads YCVTIPSWIV…SFLELEAAAR (118 aa). Disordered regions lie at residues 169–193 and 209–230; these read QDVDQNASDSNNDRSSTSSSPMVHP and YGSDTAYETSEVGSPSVGQDDI. A compositionally biased stretch (low complexity) spans 172–193; sequence DQNASDSNNDRSSTSSSPMVHP. Residues 209 to 225 show a composition bias toward polar residues; sequence YGSDTAYETSEVGSPSV. 2 coiled-coil regions span residues 401–474 and 503–555; these read NERL…LRQK and KHVL…LEKE. Positions 698-723 are disordered; the sequence is DVKTTEDVNEENSDEKDEASRETLKR. Positions 704-714 are enriched in acidic residues; that stretch reads DVNEENSDEKD.

It is found in the cytoplasm. It localises to the cytosol. Its subcellular location is the endosome membrane. In terms of biological role, acts as an effector of RABF2A and RABF2B. Involved in vacuolar transport of storage proteins. Regulates membrane trafficking to protein storage vacuoles (PSVs). Binds specifically to phosphatidylinositol 3-monophosphate (PtdIns3P). This Arabidopsis thaliana (Mouse-ear cress) protein is PX domain-containing protein EREL1.